We begin with the raw amino-acid sequence, 123 residues long: Defensin beta 118 (123 aa).

The signal sequence occupies residues 1-19; it reads MKLLLLALPMLVLLPQVIP. 3 disulfide bridges follow: C27-C54, C34-C48, and C38-C55. A propeptide spanning residues 65–123 is cleaved from the precursor; the sequence is VPTTSPTPLSDSTPGIIDDILTVRFTTDYFEVSSKKDMIEESEAGRGTETSLPNVHHSS. The segment covering 100-110 has biased composition (basic and acidic residues); sequence KDMIEESEAGR. Residues 100 to 123 are disordered; sequence KDMIEESEAGRGTETSLPNVHHSS. The segment covering 112–123 has biased composition (polar residues); sequence TETSLPNVHHSS.

Belongs to the beta-defensin family. In terms of processing, the three-dimensional structure formed by the three intramolecular disulfide bridges is indispensable for antimicrobial activity.

It is found in the secreted. Its function is as follows. Host defense peptide that exhibits antimicrobial activity against both Gram-negative bacteria, such as E.coli and S.typhimurium, and Gram-positive bacteria, such as S.aureus and B.subtilis. Inhibits cell adhesion of E.coli on intestinal epithelial enterocytes. Causes rapid permeabilization of both the outer and inner membrane of E.coli, leading to morphological alterations on the bacterial surface. Binds to bacterial lipopolysaccharides (LPS) with high affinity, and may thereby be involved in immunoregulation through LPS neutralization. May contribute to epididymal innate immunity and protect the sperm against attack by microorganisms. This Gorilla gorilla gorilla (Western lowland gorilla) protein is Defensin beta 118 (DEFB118).